Consider the following 565-residue polypeptide: Periplasmic trehalase (565 aa).

An N-terminal signal peptide occupies residues 1 to 30 (MKSPAPSRPQKMALIPACIFLCFAALSVQA). Residues Arg152, 159–160 (WD), Asn196, 205–207 (RSQ), 277–279 (RPE), and Gly310 each bind substrate. Residues Asp312 and Glu496 each act as proton donor/acceptor in the active site. Glu511 provides a ligand contact to substrate. Residues 538–565 (PCDNVPATRPTVKSATTQPSTKEAQPTP) form a disordered region. Polar residues predominate over residues 548–565 (TVKSATTQPSTKEAQPTP).

It belongs to the glycosyl hydrolase 37 family. Monomer.

The protein localises to the periplasm. It carries out the reaction alpha,alpha-trehalose + H2O = alpha-D-glucose + beta-D-glucose. Its function is as follows. Provides the cells with the ability to utilize trehalose at high osmolarity by splitting it into glucose molecules that can subsequently be taken up by the phosphotransferase-mediated uptake system. The sequence is that of Periplasmic trehalase from Escherichia coli (strain K12 / MC4100 / BW2952).